Here is a 399-residue protein sequence, read N- to C-terminus: Phosphoprotein (399 aa).

Polar residues-rich tracts occupy residues 30 to 46 (ATSQSSLNKPPSQSSRT) and 82 to 112 (GRQNLDSLSMISNKPQTGTLLMGSDTQLPSP). Residues 30–112 (ATSQSSLNKP…MGSDTQLPSP (83 aa)) are disordered. A multimerization region spans residues 224-287 (NYASEILDAI…ITTMKIMDPG (64 aa)). A coiled-coil region spans residues 226–253 (ASEILDAIKALEVRLDRIEGKVDKIMLT).

This sequence belongs to the rubulavirus/avulavirus P protein family. As to quaternary structure, homotetramer. Interacts (via multimerization domain) with polymerase L; this interaction forms the polymerase L-P complex. Interacts (via N-terminus) with N0 (via Ncore); this interaction allows P to chaperon N0 to avoid N polymerization before encapsidation. Interacts (via C-terminus) with N-RNA template; this interaction positions the polymerase on the template for both transcription and replication.

Essential cofactor of the RNA polymerase L that plays a central role in the transcription and replication by forming the polymerase complex with RNA polymerase L and recruiting L to the genomic N-RNA template for RNA synthesis. Also plays a central role in the encapsidation of nascent RNA chains by forming the encapsidation complex with the nucleocapsid protein N (N-P complex). Acts as a chaperone for newly synthesized free N protein, so-called N0, allowing encapsidation of nascent RNA chains during replication. The nucleoprotein protein N prevents excessive phosphorylation of P, which leads to down-regulation of viral transcription/ replication. Participates, together with N, in the formation of viral factories (viroplasms), which are large inclusions in the host cytoplasm where replication takes place. This chain is Phosphoprotein (P/V), found in Human parainfluenza 4a virus (strain Toshiba) (HPIV-4a).